A 644-amino-acid chain; its full sequence is 1-deoxy-D-xylulose-5-phosphate synthase (644 aa).

Thiamine diphosphate is bound by residues histidine 72 and glycine 113–alanine 115. Aspartate 144 contacts Mg(2+). Thiamine diphosphate-binding positions include glycine 145–alanine 146, asparagine 174, tyrosine 287, and glutamate 370. Residue asparagine 174 participates in Mg(2+) binding.

It belongs to the transketolase family. DXPS subfamily. Homodimer. It depends on Mg(2+) as a cofactor. Thiamine diphosphate serves as cofactor.

It carries out the reaction D-glyceraldehyde 3-phosphate + pyruvate + H(+) = 1-deoxy-D-xylulose 5-phosphate + CO2. The protein operates within metabolic intermediate biosynthesis; 1-deoxy-D-xylulose 5-phosphate biosynthesis; 1-deoxy-D-xylulose 5-phosphate from D-glyceraldehyde 3-phosphate and pyruvate: step 1/1. Its function is as follows. Catalyzes the acyloin condensation reaction between C atoms 2 and 3 of pyruvate and glyceraldehyde 3-phosphate to yield 1-deoxy-D-xylulose-5-phosphate (DXP). The protein is 1-deoxy-D-xylulose-5-phosphate synthase of Prochlorococcus marinus (strain MIT 9303).